Here is a 422-residue protein sequence, read N- to C-terminus: MTVKTTVSTKDIDEAFLRLKDIVKETPLQLDHYLSQKYDCKVYLKREDLQWVRSFKLRGAYNAISVLSDEAKSKGITCASAGNHAQGVAYTAKKLNLNAVIFMPVTTPLQKVNQVKFFGNSNVEVVLTGDTFDHCLAEALTYTSEHQMNFIDPFNNVHTISGQGTLAKEMLEQSKTDNVNFDYLFAAIGGGGLISGISTYFKTYSPTTKIIGVEPSGASSMYESVVVNNQVVTLPNIDKFVDGASVARVGDITFEIAKENVDDYVQVDEGAVCSTILDMYSKQAIVAEPAGALSVSALENYKDHIKGKTVVCVISGGNNDINRMKEIEERSLLYEEMKHYFILNFPQRPGALREFVNDVLGPQDDITKFEYLKKSSQNTGTVIIGIQLKDHDDLIQLKQRVNHFDPSNIYINENKMLYSLLI.

Lys-56 is modified (N6-(pyridoxal phosphate)lysine). Residues Asn-83, 189-193 (GGGGL), and Ser-315 each bind pyridoxal 5'-phosphate. Residues 339-413 (HYFILNFPQR…FDPSNIYINE (75 aa)) form the ACT-like domain.

The protein belongs to the serine/threonine dehydratase family. In terms of assembly, homotetramer. The cofactor is pyridoxal 5'-phosphate.

The catalysed reaction is L-threonine = 2-oxobutanoate + NH4(+). It functions in the pathway amino-acid biosynthesis; L-isoleucine biosynthesis; 2-oxobutanoate from L-threonine: step 1/1. Its function is as follows. Catalyzes the anaerobic formation of alpha-ketobutyrate and ammonia from threonine in a two-step reaction. The first step involved a dehydration of threonine and a production of enamine intermediates (aminocrotonate), which tautomerizes to its imine form (iminobutyrate). Both intermediates are unstable and short-lived. The second step is the nonenzymatic hydrolysis of the enamine/imine intermediates to form 2-ketobutyrate and free ammonia. In the low water environment of the cell, the second step is accelerated by RidA. This is L-threonine dehydratase biosynthetic IlvA (ilvA) from Staphylococcus aureus (strain MSSA476).